A 288-amino-acid chain; its full sequence is Probable proteasome subunit alpha type-7 (288 aa).

Threonine 2 carries the N-acetylthreonine modification. Positions 247–288 (INGDDDEDEDDSDNVMSSDDENAPVATNANATTDQEGDIHLE) are disordered. Residues 249 to 268 (GDDDEDEDDSDNVMSSDDEN) show a composition bias toward acidic residues. A compositionally biased stretch (low complexity) spans 269–279 (APVATNANATT).

The protein belongs to the peptidase T1A family. As to quaternary structure, the 26S proteasome consists of a 20S proteasome core and two 19S regulatory subunits. The 20S proteasome core is composed of 28 subunits that are arranged in four stacked rings, resulting in a barrel-shaped structure. The two end rings are each formed by seven alpha subunits, and the two central rings are each formed by seven beta subunits. The catalytic chamber with the active sites is on the inside of the barrel. Post-translationally, the alpha and beta forms are probably products of the same gene with different post-translational modifications.

It is found in the cytoplasm. The protein resides in the nucleus. The proteasome degrades poly-ubiquitinated proteins in the cytoplasm and in the nucleus. It is essential for the regulated turnover of proteins and for the removal of misfolded proteins. The proteasome is a multicatalytic proteinase complex that is characterized by its ability to cleave peptides with Arg, Phe, Tyr, Leu, and Glu adjacent to the leaving group at neutral or slightly basic pH. It has an ATP-dependent proteolytic activity. The chain is Probable proteasome subunit alpha type-7 (PRE10) from Saccharomyces cerevisiae (strain ATCC 204508 / S288c) (Baker's yeast).